A 396-amino-acid polypeptide reads, in one-letter code: Tryptophan synthase beta chain (396 aa).

Lys-88 bears the N6-(pyridoxal phosphate)lysine mark.

It belongs to the TrpB family. As to quaternary structure, tetramer of two alpha and two beta chains. The cofactor is pyridoxal 5'-phosphate.

It catalyses the reaction (1S,2R)-1-C-(indol-3-yl)glycerol 3-phosphate + L-serine = D-glyceraldehyde 3-phosphate + L-tryptophan + H2O. Its pathway is amino-acid biosynthesis; L-tryptophan biosynthesis; L-tryptophan from chorismate: step 5/5. In terms of biological role, the beta subunit is responsible for the synthesis of L-tryptophan from indole and L-serine. The protein is Tryptophan synthase beta chain of Leptospira biflexa serovar Patoc (strain Patoc 1 / Ames).